The sequence spans 336 residues: tRNA(Ile)-lysidine synthase (336 aa).

40-45 provides a ligand contact to ATP; sequence SGGQDS.

It belongs to the tRNA(Ile)-lysidine synthase family.

The protein localises to the cytoplasm. It carries out the reaction cytidine(34) in tRNA(Ile2) + L-lysine + ATP = lysidine(34) in tRNA(Ile2) + AMP + diphosphate + H(+). In terms of biological role, ligates lysine onto the cytidine present at position 34 of the AUA codon-specific tRNA(Ile) that contains the anticodon CAU, in an ATP-dependent manner. Cytidine is converted to lysidine, thus changing the amino acid specificity of the tRNA from methionine to isoleucine. The chain is tRNA(Ile)-lysidine synthase from Prochlorococcus marinus (strain SARG / CCMP1375 / SS120).